The following is a 149-amino-acid chain: Putative sugar phosphate isomerase YwlF (149 aa).

Residue His9 coordinates substrate. The Proton acceptor role is filled by Cys66. 67 to 72 (GTGIGM) serves as a coordination point for substrate. His99 acts as the Proton donor in catalysis. A substrate-binding site is contributed by Arg133.

The protein belongs to the LacAB/RpiB family.

This is Putative sugar phosphate isomerase YwlF (ywlF) from Bacillus subtilis (strain 168).